We begin with the raw amino-acid sequence, 353 residues long: Phospho-N-acetylmuramoyl-pentapeptide-transferase (353 aa).

10 consecutive transmembrane segments (helical) span residues 24–44 (LGFF…ILWA), 66–86 (TPTM…VLCA), 88–108 (LGNL…FVGF), 129–149 (FGML…KGLD), 160–180 (PLFE…FLST), 192–212 (GLAS…VYVA), 229–249 (VGEL…FLWY), 256–276 (VFMG…NAIV), 281–301 (ILLV…ILQV), and 330–350 (KVIV…LLSL).

The protein belongs to the glycosyltransferase 4 family. MraY subfamily. The cofactor is Mg(2+).

The protein localises to the cell inner membrane. The catalysed reaction is UDP-N-acetyl-alpha-D-muramoyl-L-alanyl-gamma-D-glutamyl-meso-2,6-diaminopimeloyl-D-alanyl-D-alanine + di-trans,octa-cis-undecaprenyl phosphate = di-trans,octa-cis-undecaprenyl diphospho-N-acetyl-alpha-D-muramoyl-L-alanyl-D-glutamyl-meso-2,6-diaminopimeloyl-D-alanyl-D-alanine + UMP. The protein operates within cell wall biogenesis; peptidoglycan biosynthesis. Catalyzes the initial step of the lipid cycle reactions in the biosynthesis of the cell wall peptidoglycan: transfers peptidoglycan precursor phospho-MurNAc-pentapeptide from UDP-MurNAc-pentapeptide onto the lipid carrier undecaprenyl phosphate, yielding undecaprenyl-pyrophosphoryl-MurNAc-pentapeptide, known as lipid I. This is Phospho-N-acetylmuramoyl-pentapeptide-transferase from Helicobacter pylori (strain Shi470).